Consider the following 148-residue polypeptide: NADH-quinone oxidoreductase subunit K 2 (148 aa).

3 helical membrane passes run 3–23, 28–48, and 64–84; these read LAYPAVLAALLFCVGLYGVLA, ILVLMSVELMLNAVNLNLVAF, and LFTIAIAAAEIGIGLAIVLAV. Positions 96–148 are disordered; that stretch reads LRDTAETDAAETLPDDAGTGPSGTDAAPNGDTTTATGRPGDNAGKNKKAEATR.

Belongs to the complex I subunit 4L family. NDH-1 is composed of 14 different subunits. Subunits NuoA, H, J, K, L, M, N constitute the membrane sector of the complex.

The protein resides in the cell membrane. The catalysed reaction is a quinone + NADH + 5 H(+)(in) = a quinol + NAD(+) + 4 H(+)(out). In terms of biological role, NDH-1 shuttles electrons from NADH, via FMN and iron-sulfur (Fe-S) centers, to quinones in the respiratory chain. The immediate electron acceptor for the enzyme in this species is believed to be a menaquinone. Couples the redox reaction to proton translocation (for every two electrons transferred, four hydrogen ions are translocated across the cytoplasmic membrane), and thus conserves the redox energy in a proton gradient. The sequence is that of NADH-quinone oxidoreductase subunit K 2 from Streptomyces griseus subsp. griseus (strain JCM 4626 / CBS 651.72 / NBRC 13350 / KCC S-0626 / ISP 5235).